Here is a 487-residue protein sequence, read N- to C-terminus: NADH-quinone oxidoreductase subunit N (487 aa).

A run of 14 helical transmembrane segments spans residues 16–36 (VIMP…VNVF), 45–65 (LAWL…TGWG), 79–99 (NFAI…VLIS), 111–131 (GELY…AAAT), 133–153 (LMTI…LAGF), 168–188 (FLLG…IYGV), 212–232 (LLIG…AAPF), 257–276 (AAGF…AMIA), 281–298 (LLWI…FTAL), 306–326 (MLAY…ASGT), 333–353 (ILFY…VIVL), 378–398 (ALAM…AGFI), 413–435 (IWLA…RVIV), and 457–477 (LALV…SMIL).

This sequence belongs to the complex I subunit 2 family. NDH-1 is composed of 14 different subunits. Subunits NuoA, H, J, K, L, M, N constitute the membrane sector of the complex.

The protein resides in the cell inner membrane. The catalysed reaction is a quinone + NADH + 5 H(+)(in) = a quinol + NAD(+) + 4 H(+)(out). NDH-1 shuttles electrons from NADH, via FMN and iron-sulfur (Fe-S) centers, to quinones in the respiratory chain. The immediate electron acceptor for the enzyme in this species is believed to be ubiquinone. Couples the redox reaction to proton translocation (for every two electrons transferred, four hydrogen ions are translocated across the cytoplasmic membrane), and thus conserves the redox energy in a proton gradient. This Trichlorobacter lovleyi (strain ATCC BAA-1151 / DSM 17278 / SZ) (Geobacter lovleyi) protein is NADH-quinone oxidoreductase subunit N.